The chain runs to 119 residues: Large ribosomal subunit protein uL22 (119 aa).

It belongs to the universal ribosomal protein uL22 family. Part of the 50S ribosomal subunit.

Functionally, this protein binds specifically to 23S rRNA; its binding is stimulated by other ribosomal proteins, e.g. L4, L17, and L20. It is important during the early stages of 50S assembly. It makes multiple contacts with different domains of the 23S rRNA in the assembled 50S subunit and ribosome. The globular domain of the protein is located near the polypeptide exit tunnel on the outside of the subunit, while an extended beta-hairpin is found that lines the wall of the exit tunnel in the center of the 70S ribosome. This chain is Large ribosomal subunit protein uL22, found in Bifidobacterium animalis subsp. lactis (strain AD011).